The primary structure comprises 205 residues: ATP phosphoribosyltransferase (205 aa).

It belongs to the ATP phosphoribosyltransferase family. Short subfamily. As to quaternary structure, heteromultimer composed of HisG and HisZ subunits.

Its subcellular location is the cytoplasm. The enzyme catalyses 1-(5-phospho-beta-D-ribosyl)-ATP + diphosphate = 5-phospho-alpha-D-ribose 1-diphosphate + ATP. It participates in amino-acid biosynthesis; L-histidine biosynthesis; L-histidine from 5-phospho-alpha-D-ribose 1-diphosphate: step 1/9. In terms of biological role, catalyzes the condensation of ATP and 5-phosphoribose 1-diphosphate to form N'-(5'-phosphoribosyl)-ATP (PR-ATP). Has a crucial role in the pathway because the rate of histidine biosynthesis seems to be controlled primarily by regulation of HisG enzymatic activity. This Staphylococcus carnosus (strain TM300) protein is ATP phosphoribosyltransferase.